Consider the following 437-residue polypeptide: UDP-N-acetylmuramate--L-alanine ligase (437 aa).

114 to 120 (GTHGKTS) provides a ligand contact to ATP.

The protein belongs to the MurCDEF family.

It is found in the cytoplasm. The catalysed reaction is UDP-N-acetyl-alpha-D-muramate + L-alanine + ATP = UDP-N-acetyl-alpha-D-muramoyl-L-alanine + ADP + phosphate + H(+). Its pathway is cell wall biogenesis; peptidoglycan biosynthesis. Functionally, cell wall formation. The protein is UDP-N-acetylmuramate--L-alanine ligase of Lactobacillus helveticus (strain DPC 4571).